Here is a 488-residue protein sequence, read N- to C-terminus: Phenylalanine--tRNA ligase alpha subunit (488 aa).

Residues threonine 315, 354–356 (QLD), phenylalanine 394, and phenylalanine 419 each bind L-phenylalanine.

Belongs to the class-II aminoacyl-tRNA synthetase family. Phe-tRNA synthetase alpha subunit type 2 subfamily. As to quaternary structure, tetramer of two alpha and two beta subunits. The cofactor is Mg(2+).

The protein localises to the cytoplasm. It carries out the reaction tRNA(Phe) + L-phenylalanine + ATP = L-phenylalanyl-tRNA(Phe) + AMP + diphosphate + H(+). This chain is Phenylalanine--tRNA ligase alpha subunit, found in Pyrobaculum calidifontis (strain DSM 21063 / JCM 11548 / VA1).